Reading from the N-terminus, the 195-residue chain is Dynactin subunit 6 (195 aa).

The protein belongs to the dynactin subunits 5/6 family. Dynactin subunit 6 subfamily. Member of the pointed-end complex of the dynactin shoulder complex which contains dctn4, dctn5 and dctn6 subunits and Actr10. Within the complex dctn6 forms a heterodimer with dctn5. Interacts with plk1.

It localises to the cytoplasm. The protein localises to the cytoskeleton. The protein resides in the chromosome. Its subcellular location is the centromere. It is found in the kinetochore. Part of the dynactin complex that activates the molecular motor dynein for ultra-processive transport along microtubules. The chain is Dynactin subunit 6 (dctn6) from Danio rerio (Zebrafish).